We begin with the raw amino-acid sequence, 214 residues long: Rac-like GTP-binding protein 2 (214 aa).

14–21 (GDGAVGKT) serves as a coordination point for GTP. Residues 36-44 (YIPTVFDNF) carry the Effector region motif. GTP contacts are provided by residues 61–65 (DTAGQ) and 119–122 (TKLD).

Belongs to the small GTPase superfamily. Rho family. In terms of processing, may be palmitoylated.

The protein resides in the cytoplasm. It localises to the membrane. In terms of biological role, inactive GDP-bound Rho GTPases reside in the cytosol, are found in a complex with Rho GDP-dissociation inhibitors (Rho GDIs), and are released from the GDI protein in order to translocate to membranes upon activation. This chain is Rac-like GTP-binding protein 2 (RAC2), found in Oryza sativa subsp. japonica (Rice).